The following is a 146-amino-acid chain: Hemoglobin subunit beta-1 (146 aa).

An N-acetylserine modification is found at serine 1. A Globin domain is found at 2–146; the sequence is FLSAEEKGLV…VASALAHRYH (145 aa). Lysine 17 carries the N6-succinyllysine modification. A phosphoserine mark is found at serine 44 and serine 50. N6-succinyllysine is present on lysine 59. Histidine 63 and histidine 92 together coordinate heme b. Residue arginine 104 is modified to Asymmetric dimethylarginine.

Belongs to the globin family. Heterotetramer of two alpha chains and two beta chains. As to expression, red blood cells.

Involved in oxygen transport from the lung to the various peripheral tissues. The protein is Hemoglobin subunit beta-1 (HBB1) of Panthera leo (Lion).